Consider the following 211-residue polypeptide: Probable septum site-determining protein MinC (211 aa).

This sequence belongs to the MinC family. In terms of assembly, interacts with MinD and FtsZ.

Functionally, cell division inhibitor that blocks the formation of polar Z ring septums. Rapidly oscillates between the poles of the cell to destabilize FtsZ filaments that have formed before they mature into polar Z rings. Prevents FtsZ polymerization. This Clostridium acetobutylicum (strain ATCC 824 / DSM 792 / JCM 1419 / IAM 19013 / LMG 5710 / NBRC 13948 / NRRL B-527 / VKM B-1787 / 2291 / W) protein is Probable septum site-determining protein MinC.